A 119-amino-acid polypeptide reads, in one-letter code: Microtubule nucleation factor SSNA1 (119 aa).

Threonine 2 is subject to N-acetylthreonine. The segment at 2–32 (TQQGAALQNYNNELVKCIEELCQKREELCRQ) is important for localization to the centrosome. The stretch at 13–70 (NELVKCIEELCQKREELCRQIQQEEDEKQRLQNEVRQLTEKLARVNENLARKIASRNE) forms a coiled coil.

It belongs to the SSNA1 family. As to quaternary structure, self-associates to form fibrils. Also forms dimers as well as monomers. Interacts with SPAST.

Its subcellular location is the nucleus. The protein localises to the cytoplasm. It is found in the cytoskeleton. It localises to the microtubule organizing center. The protein resides in the centrosome. Its subcellular location is the centriole. The protein localises to the midbody. It is found in the flagellum basal body. It localises to the flagellum axoneme. The protein resides in the cell projection. Its subcellular location is the axon. Microtubule-binding protein which stabilizes dynamic microtubules by slowing growth and shrinkage at both plus and minus ends and serves as a sensor of microtubule damage, protecting microtubules from the microtubule-severing enzyme SPAST. Induces microtubule branching which is mediated by the formation of long SSNA1 fibrils which guide microtubule protofilaments to split apart from the mother microtubule and form daughter microtubules. Plays a role in axon outgrowth and branching. Required for cell division. This is Microtubule nucleation factor SSNA1 from Mus musculus (Mouse).